Consider the following 440-residue polypeptide: T-box transcription factor T homolog 2 (440 aa).

Residues 44-215 (LWEKFKSLTN…HNPFAKAFLD (172 aa)) constitute a DNA-binding region (T-box). 2 disordered regions span residues 282–303 (APYP…DTAA) and 393–440 (TTAS…MPSM). Polar residues predominate over residues 409 to 440 (STDSGYGHSTTPPAPQTRITSNNWSPMTMPSM).

Mesoderm and notochord.

It localises to the nucleus. Its function is as follows. Involved in the transcriptional regulation of genes required for mesoderm formation and differentiation. The polypeptide is T-box transcription factor T homolog 2 (Branchiostoma floridae (Florida lancelet)).